The chain runs to 800 residues: Protein translocase subunit SecA (800 aa).

ATP-binding positions include glutamine 85, 103-107, and aspartate 504; that span reads GEGKT.

The protein belongs to the SecA family. In terms of assembly, monomer and homodimer. Part of the essential Sec protein translocation apparatus which comprises SecA, SecYEG and auxiliary proteins SecDF. Other proteins may also be involved.

The protein resides in the cell membrane. Its subcellular location is the cytoplasm. The enzyme catalyses ATP + H2O + cellular proteinSide 1 = ADP + phosphate + cellular proteinSide 2.. In terms of biological role, part of the Sec protein translocase complex. Interacts with the SecYEG preprotein conducting channel. Has a central role in coupling the hydrolysis of ATP to the transfer of proteins into and across the cell membrane, serving as an ATP-driven molecular motor driving the stepwise translocation of polypeptide chains across the membrane. The chain is Protein translocase subunit SecA from Lactobacillus delbrueckii subsp. bulgaricus (strain ATCC 11842 / DSM 20081 / BCRC 10696 / JCM 1002 / NBRC 13953 / NCIMB 11778 / NCTC 12712 / WDCM 00102 / Lb 14).